A 728-amino-acid polypeptide reads, in one-letter code: MGRRKKIVQECETLMDDPEHIRNIAIAAHVDHGKTTLTDNLLAGAGMISDDTAGEQLAMDTEEDEQERGITIDAANVSMTHEYEDQNHLINLIDTPGHVDFGGDVTRAMRAVDGALVVVDAVEGAMPQTETVLRQALREGVKPTLFINKVDRLISELQEGPEEMQKRLLAVIQDVNDLIRGMTEEMDDIEDWTVSVEEGTVGFGSALYKWGVSMPSMQRTGMDFGEIMELERADNRQELHERTPLSDVVLDMVCEHFPNPVDAQPMRVPRIWRGDAESQLADDMRLVNEDGEVVLMVTDIGVDPHAGEIAAGRVFSGTLEKGQELYVSGTAGKNRIQSVGIYMGGEREEVDRVPAGNIAAVTGLKDAIAGSTVSSEEMTPFESIEHISEPVITKSVEAQNMDDLPKLIETLQQVAKEDPTIQVEINEDTGEHLISGQGELHLEVIGQRIERNQGIPINTGEPIVVYREAPQEDSREVEGRSPNNHNRFYISIEPLGEDIVETIKMGEASMDMPELERREALQEAGMDKDDSQNIEHIHGTNILLDETKGIQHLNETMELVIEGLEEALDDGPLASEPVQGSLIRLHDARLHEDAIHRGPAQVIPAVREAVHNSLIDASIKLLEPIQQVRIDVPNDHMGAASGEIQGRRGRVDDMYQEGDLMVVEGVAPVDEMIGFSSDIRSATEGRASWNTENAGFQVLADNLQPDKISEIRERKGMKQELNPAIDYF.

One can recognise a tr-type G domain in the interval 19–261 (EHIRNIAIAA…MVCEHFPNPV (243 aa)). Residues 28–35 (AHVDHGKT), 94–98 (DTPGH), and 148–151 (NKVD) contribute to the GTP site. H596 bears the Diphthamide mark.

This sequence belongs to the TRAFAC class translation factor GTPase superfamily. Classic translation factor GTPase family. EF-G/EF-2 subfamily.

The protein localises to the cytoplasm. In terms of biological role, catalyzes the GTP-dependent ribosomal translocation step during translation elongation. During this step, the ribosome changes from the pre-translocational (PRE) to the post-translocational (POST) state as the newly formed A-site-bound peptidyl-tRNA and P-site-bound deacylated tRNA move to the P and E sites, respectively. Catalyzes the coordinated movement of the two tRNA molecules, the mRNA and conformational changes in the ribosome. This chain is Elongation factor 2, found in Haloarcula marismortui (strain ATCC 43049 / DSM 3752 / JCM 8966 / VKM B-1809) (Halobacterium marismortui).